Consider the following 637-residue polypeptide: 1-deoxy-D-xylulose-5-phosphate synthase 1 (637 aa).

Thiamine diphosphate is bound by residues H74 and 115–117; that span reads GHS. A Mg(2+)-binding site is contributed by D146. Thiamine diphosphate is bound by residues 147-148, N175, Y286, and E368; that span reads GS. Mg(2+) is bound at residue N175.

Belongs to the transketolase family. DXPS subfamily. Homodimer. Mg(2+) serves as cofactor. The cofactor is thiamine diphosphate.

The catalysed reaction is D-glyceraldehyde 3-phosphate + pyruvate + H(+) = 1-deoxy-D-xylulose 5-phosphate + CO2. Its pathway is metabolic intermediate biosynthesis; 1-deoxy-D-xylulose 5-phosphate biosynthesis; 1-deoxy-D-xylulose 5-phosphate from D-glyceraldehyde 3-phosphate and pyruvate: step 1/1. Catalyzes the acyloin condensation reaction between C atoms 2 and 3 of pyruvate and glyceraldehyde 3-phosphate to yield 1-deoxy-D-xylulose-5-phosphate (DXP). This is 1-deoxy-D-xylulose-5-phosphate synthase 1 from Geobacter sulfurreducens (strain ATCC 51573 / DSM 12127 / PCA).